The chain runs to 217 residues: Peptide methionine sulfoxide reductase MsrA 1 (217 aa).

Cysteine 54 is an active-site residue.

This sequence belongs to the MsrA Met sulfoxide reductase family.

It carries out the reaction L-methionyl-[protein] + [thioredoxin]-disulfide + H2O = L-methionyl-(S)-S-oxide-[protein] + [thioredoxin]-dithiol. The enzyme catalyses [thioredoxin]-disulfide + L-methionine + H2O = L-methionine (S)-S-oxide + [thioredoxin]-dithiol. In terms of biological role, has an important function as a repair enzyme for proteins that have been inactivated by oxidation. Catalyzes the reversible oxidation-reduction of methionine sulfoxide in proteins to methionine. This is Peptide methionine sulfoxide reductase MsrA 1 (msrA1) from Caulobacter vibrioides (strain ATCC 19089 / CIP 103742 / CB 15) (Caulobacter crescentus).